A 154-amino-acid chain; its full sequence is Prefoldin subunit 5 (154 aa).

The residue at position 2 (Ala-2) is an N-acetylalanine. Position 42 is an N6-acetyllysine (Lys-42). Ser-56 carries the post-translational modification Phosphoserine.

Belongs to the prefoldin subunit alpha family. In terms of assembly, heterohexamer of two PFD-alpha type and four PFD-beta type subunits.

The protein resides in the nucleus. Functionally, binds specifically to cytosolic chaperonin (c-CPN) and transfers target proteins to it. Binds to nascent polypeptide chain and promotes folding in an environment in which there are many competing pathways for nonnative proteins. Represses the transcriptional activity of MYC. This Pongo abelii (Sumatran orangutan) protein is Prefoldin subunit 5 (PFDN5).